The chain runs to 23 residues: Caerin-4.3 (23 aa).

Expressed by the skin parotoid and/or rostral glands.

Its subcellular location is the secreted. In terms of biological role, antibacterial peptide, that adopts an alpha helical conformation which can disrupt bacterial membranes. Each caerin displays a different antimicrobial specificity. The sequence is that of Caerin-4.3 from Ranoidea caerulea (Green tree frog).